We begin with the raw amino-acid sequence, 254 residues long: Ankyrin repeat domain-containing protein 7 (254 aa).

ANK repeat units lie at residues 58–87 (KYRT…KINV), 91–120 (ENKS…DPDL), 124–153 (RYNT…DLEA), 157–186 (DGYT…DVNA), and 190–219 (YQRT…ELCY).

Testis specific.

This chain is Ankyrin repeat domain-containing protein 7 (ANKRD7), found in Homo sapiens (Human).